The following is a 437-amino-acid chain: MTEQVVNVIGAGLAGSEAAWQIAKRGVKVRLYEMRPVKQTPAHHTDKFAELVCSNSLRANGLTNAVGVIKEEMRILDSVILKAADQCSVPAGGALAVDRHEFAGYVTEAVKNHPLVEVIHEEVTEIPEGITVIATGPLTSKALAEKIQGLTGLDYLYFYDAAAPIIEKDSIDMDKVYLKSRYDKGEAAYLNCPMTKEEFDRFRQALIEAEVVPLKEFEKEIYFEGCMPIEVMASRGEKTMLFGPMKPVGLEDPKTGKRPYAVVQLRQDDAAGTLYNIVGFQTHLKWGPQKEVLQLIPGLENVEIVRYGVMHRNTFINSPKVLEKTYQLREQKNIFFAGQMTGVEGYVESAGSGLIAGINAARLALGQEPIIFPFETALGSMARYITEAQSKNFQPMNVNFGIFPELPPGRRSKPERAEMHATRAISTIHNFVNSQTI.

An FAD-binding site is contributed by 10 to 15 (GAGLAG).

The protein belongs to the MnmG family. TrmFO subfamily. Requires FAD as cofactor.

It is found in the cytoplasm. The enzyme catalyses uridine(54) in tRNA + (6R)-5,10-methylene-5,6,7,8-tetrahydrofolate + NADH + H(+) = 5-methyluridine(54) in tRNA + (6S)-5,6,7,8-tetrahydrofolate + NAD(+). It catalyses the reaction uridine(54) in tRNA + (6R)-5,10-methylene-5,6,7,8-tetrahydrofolate + NADPH + H(+) = 5-methyluridine(54) in tRNA + (6S)-5,6,7,8-tetrahydrofolate + NADP(+). In terms of biological role, catalyzes the folate-dependent formation of 5-methyl-uridine at position 54 (M-5-U54) in all tRNAs. This is Methylenetetrahydrofolate--tRNA-(uracil-5-)-methyltransferase TrmFO from Lysinibacillus sphaericus (strain C3-41).